The chain runs to 308 residues: MSNATKFGKVAVLLGGKSAERAVSLDSGQAVLDALLRSGVQAEAFDPQNRSVTELVNYDRAFIVLHGRGGEDGQIQGVLEWLNIPYTGTGVQGSAIGMDKVKTKQIWQGSDLPTAPYRIITKETDLDSVIAELGLPVIIKPVHEGSSVGMSKVEKAEDFAAAIEKATQHDAVVMAEKWITGREFTISFLNGQPLPVIRLQPPADVAFYDYEAKYQRNDVEYGIPCGLSETEEKKLQALCLRAFQAVGAEGWGRIDAMQDEQGNFWLLEVNTVPGMTSHSLVPKAAKAVGYSFDELCVAILDQTLEGTA.

The ATP-grasp domain occupies 104–301 (KQIWQGSDLP…FDELCVAILD (198 aa)). 130–185 (IAELGLPVIIKPVHEGSSVGMSKVEKAEDFAAAIEKATQHDAVVMAEKWITGREFT) contacts ATP. Residues D255, E268, and N270 each contribute to the Mg(2+) site.

The protein belongs to the D-alanine--D-alanine ligase family. Mg(2+) is required as a cofactor. Requires Mn(2+) as cofactor.

The protein localises to the cytoplasm. It carries out the reaction 2 D-alanine + ATP = D-alanyl-D-alanine + ADP + phosphate + H(+). It functions in the pathway cell wall biogenesis; peptidoglycan biosynthesis. Functionally, cell wall formation. This is D-alanine--D-alanine ligase from Acinetobacter baumannii (strain AB307-0294).